The sequence spans 346 residues: Holliday junction branch migration complex subunit RuvB (346 aa).

Positions M1–A11 are enriched in polar residues. The segment at M1–A20 is disordered. The large ATPase domain (RuvB-L) stretch occupies residues M1–Y183. ATP-binding positions include I22, R23, G64, K67, T68, T69, E130–F132, R173, Y183, and R220. T68 contacts Mg(2+). A small ATPAse domain (RuvB-S) region spans residues S184–K254. The interval P257–F346 is head domain (RuvB-H). DNA is bound by residues R293, R312, and R317.

It belongs to the RuvB family. Homohexamer. Forms an RuvA(8)-RuvB(12)-Holliday junction (HJ) complex. HJ DNA is sandwiched between 2 RuvA tetramers; dsDNA enters through RuvA and exits via RuvB. An RuvB hexamer assembles on each DNA strand where it exits the tetramer. Each RuvB hexamer is contacted by two RuvA subunits (via domain III) on 2 adjacent RuvB subunits; this complex drives branch migration. In the full resolvosome a probable DNA-RuvA(4)-RuvB(12)-RuvC(2) complex forms which resolves the HJ.

It is found in the cytoplasm. It catalyses the reaction ATP + H2O = ADP + phosphate + H(+). In terms of biological role, the RuvA-RuvB-RuvC complex processes Holliday junction (HJ) DNA during genetic recombination and DNA repair, while the RuvA-RuvB complex plays an important role in the rescue of blocked DNA replication forks via replication fork reversal (RFR). RuvA specifically binds to HJ cruciform DNA, conferring on it an open structure. The RuvB hexamer acts as an ATP-dependent pump, pulling dsDNA into and through the RuvAB complex. RuvB forms 2 homohexamers on either side of HJ DNA bound by 1 or 2 RuvA tetramers; 4 subunits per hexamer contact DNA at a time. Coordinated motions by a converter formed by DNA-disengaged RuvB subunits stimulates ATP hydrolysis and nucleotide exchange. Immobilization of the converter enables RuvB to convert the ATP-contained energy into a lever motion, pulling 2 nucleotides of DNA out of the RuvA tetramer per ATP hydrolyzed, thus driving DNA branch migration. The RuvB motors rotate together with the DNA substrate, which together with the progressing nucleotide cycle form the mechanistic basis for DNA recombination by continuous HJ branch migration. Branch migration allows RuvC to scan DNA until it finds its consensus sequence, where it cleaves and resolves cruciform DNA. This chain is Holliday junction branch migration complex subunit RuvB, found in Xanthomonas campestris pv. campestris (strain ATCC 33913 / DSM 3586 / NCPPB 528 / LMG 568 / P 25).